Reading from the N-terminus, the 323-residue chain is Probable cell division protein WhiA (323 aa).

A DNA-binding region (H-T-H motif) is located at residues 275-309 (TLKELGEMLTTGQVSKSGINHRLRKLDQIAERLRS).

This sequence belongs to the WhiA family.

Its function is as follows. Involved in cell division and chromosome segregation. The chain is Probable cell division protein WhiA from Listeria innocua serovar 6a (strain ATCC BAA-680 / CLIP 11262).